Here is a 990-residue protein sequence, read N- to C-terminus: Bifunctional glutamine synthetase adenylyltransferase/adenylyl-removing enzyme (990 aa).

The tract at residues 1–474 (MPTDNENSMT…HFNELVEESQ (474 aa)) is adenylyl removase. The adenylyl transferase stretch occupies residues 484-990 (FIACQDAWRL…WDTLFGTCSE (507 aa)).

This sequence belongs to the GlnE family. It depends on Mg(2+) as a cofactor.

The catalysed reaction is [glutamine synthetase]-O(4)-(5'-adenylyl)-L-tyrosine + phosphate = [glutamine synthetase]-L-tyrosine + ADP. The enzyme catalyses [glutamine synthetase]-L-tyrosine + ATP = [glutamine synthetase]-O(4)-(5'-adenylyl)-L-tyrosine + diphosphate. Functionally, involved in the regulation of glutamine synthetase GlnA, a key enzyme in the process to assimilate ammonia. When cellular nitrogen levels are high, the C-terminal adenylyl transferase (AT) inactivates GlnA by covalent transfer of an adenylyl group from ATP to specific tyrosine residue of GlnA, thus reducing its activity. Conversely, when nitrogen levels are low, the N-terminal adenylyl removase (AR) activates GlnA by removing the adenylyl group by phosphorolysis, increasing its activity. The regulatory region of GlnE binds the signal transduction protein PII (GlnB) which indicates the nitrogen status of the cell. The protein is Bifunctional glutamine synthetase adenylyltransferase/adenylyl-removing enzyme of Alteromonas mediterranea (strain DSM 17117 / CIP 110805 / LMG 28347 / Deep ecotype).